A 1380-amino-acid polypeptide reads, in one-letter code: DNA-directed RNA polymerase subunit beta (1380 aa).

It belongs to the RNA polymerase beta chain family. As to quaternary structure, the RNAP catalytic core consists of 2 alpha, 1 beta, 1 beta' and 1 omega subunit. When a sigma factor is associated with the core the holoenzyme is formed, which can initiate transcription.

The catalysed reaction is RNA(n) + a ribonucleoside 5'-triphosphate = RNA(n+1) + diphosphate. In terms of biological role, DNA-dependent RNA polymerase catalyzes the transcription of DNA into RNA using the four ribonucleoside triphosphates as substrates. This is DNA-directed RNA polymerase subunit beta from Ehrlichia chaffeensis (strain ATCC CRL-10679 / Arkansas).